We begin with the raw amino-acid sequence, 204 residues long: Putative 3-methyladenine DNA glycosylase (204 aa).

This sequence belongs to the DNA glycosylase MPG family.

This chain is Putative 3-methyladenine DNA glycosylase, found in Bacillus mycoides (strain KBAB4) (Bacillus weihenstephanensis).